The chain runs to 416 residues: MIYTAIDNFYLSDEQLKASPSRKDGIDETTEISLRIYGCDLIQEGGILLKLPQAVMATGQVLFQRFYCKKSLAKFDVKIVAASCVWLASKLEENPKKARQVIIVFHRMECRRENLPLEHLDMYAKKFSELKVELSRTERHILKEMGFVCHVEHPHKFISNYLATLETPPELRQEAWNLANDSLRTTLCVRFRSEVVACGVVYAAARRFQVPLPENPPWWKAFDADKSSIDEVCRVLAHLYSLPKAQYISVCKDGKPFTFSSRSGNSQGQSATKDLLPGAGEAVDTKCTAGSANNDLKDGMVTTPHEKATDSKKSGTESNSQPIVGDSSYERSKVGDRERESDREKERGRERDRGRSHRGRDSDRDSDRERDKLKDRSHHRSRDRLKDSGGHSDKSRHHSSRDRDYRDSSKDRRRHH.

The disordered stretch occupies residues 286–416 (KCTAGSANND…DSSKDRRRHH (131 aa)). Basic and acidic residues-rich tracts occupy residues 304-315 (PHEKATDSKKSG), 328-374 (SYER…DKLK), 384-393 (RLKDSGGHSD), and 401-410 (RDRDYRDSSK).

This sequence belongs to the cyclin family. Cyclin L subfamily. Forms a complex with CDKG1. Interacts with MOS4 and associates with the spliceosome.

It localises to the nucleus. In terms of biological role, cognate cyclin for CDKG1. Required for synapsis and male meiosis, and for the proper splicing of specific resistance (R) genes. Involved in regulation of DNA methylation and transcriptional silencing. This chain is Cyclin-L1-1 (CYCL1-1), found in Arabidopsis thaliana (Mouse-ear cress).